A 276-amino-acid chain; its full sequence is Diaminopimelate epimerase (276 aa).

3 residues coordinate substrate: asparagine 13, glutamine 46, and asparagine 66. Residue cysteine 75 is the Proton donor of the active site. Substrate contacts are provided by residues 76-77 (GN), asparagine 159, asparagine 192, and 210-211 (ER). The active-site Proton acceptor is cysteine 219. 220–221 (GT) is a binding site for substrate.

It belongs to the diaminopimelate epimerase family. In terms of assembly, homodimer.

It is found in the cytoplasm. It carries out the reaction (2S,6S)-2,6-diaminopimelate = meso-2,6-diaminopimelate. The protein operates within amino-acid biosynthesis; L-lysine biosynthesis via DAP pathway; DL-2,6-diaminopimelate from LL-2,6-diaminopimelate: step 1/1. Functionally, catalyzes the stereoinversion of LL-2,6-diaminopimelate (L,L-DAP) to meso-diaminopimelate (meso-DAP), a precursor of L-lysine and an essential component of the bacterial peptidoglycan. The polypeptide is Diaminopimelate epimerase (Pseudoalteromonas translucida (strain TAC 125)).